A 212-amino-acid polypeptide reads, in one-letter code: Calaxin (212 aa).

EF-hand domains are found at residues 65–100 (TDDMIMDRVFRGFDKDNDGCISVTEWVYGLSVFLRG), 101–136 (TLEEKMKYCFEVFDLNGDSFISKEEMFHMLKNSLLK), and 146–181 (GIKDLVEITLKKMDHDHDGKLSFADYEQAVREETLL). Ca(2+) is bound by residues Asp78, Asp80, Asp82, Cys84, Glu89, Asp114, Asn116, Asp118, Glu125, Asp159, Asp161, Asp163, Lys165, and Asp170.

As to quaternary structure, component of the outer dynein arm-docking complex along with ODAD1, ODAD2, ODAD3 and ODAD4. In terms of tissue distribution, expressed in trachea multiciliated cells.

Its subcellular location is the cytoplasm. The protein resides in the cytoskeleton. The protein localises to the cilium axoneme. It localises to the cell projection. It is found in the cilium. Its subcellular location is the flagellum. Its function is as follows. Component of the outer dynein arm-docking complex (ODA-DC) that mediates outer dynein arms (ODA) binding onto the doublet microtubule. Seems to regulate the assembly of both ODAs and their axonemal docking complex onto ciliary microtubules. Regulates ciliary and flagellar motility and is required for cilia-driven determination of body laterality. The chain is Calaxin (CLXN) from Bos taurus (Bovine).